The chain runs to 151 residues: Leukocyte cell-derived chemotaxin-2 (151 aa).

The first 18 residues, 1–18 (MIPTTILISAALLSSALA), serve as a signal peptide directing secretion. Intrachain disulfides connect Cys-25/Cys-60, Cys-36/Cys-41, and Cys-99/Cys-142. Zn(2+) contacts are provided by His-53, Asp-57, and His-138.

It belongs to the LECT2/MIM-1 family. Highly expressed in liver and weakly in testis. Not expressed in heart, brain, spleen, lung, skeletal muscle and kidney.

The protein localises to the secreted. Functionally, has a neutrophil chemotactic activity. Also a positive regulator of chondrocyte proliferation. This chain is Leukocyte cell-derived chemotaxin-2 (Lect2), found in Mus musculus (Mouse).